We begin with the raw amino-acid sequence, 217 residues long: Large ribosomal subunit protein eL14 (217 aa).

Lysine 79 is modified (N6-acetyllysine). Lysine 85 carries the post-translational modification N6-acetyllysine; alternate. An N6-succinyllysine; alternate modification is found at lysine 85. A Glycyl lysine isopeptide (Lys-Gly) (interchain with G-Cter in SUMO2) cross-link involves residue lysine 124. Residue serine 139 is modified to Phosphoserine. The disordered stretch occupies residues 162-217 (KVPAKKATGPGKKAAGQKAPAQKAAGQKAAPPAKGQKGQKTPAQKAPAPKAAGKKA). The 1-1; approximate repeat unit spans residues 173-177 (KKAAG). The segment at 173 to 192 (KKAAGQKAPAQKAAGQKAAP) is 4 X 5 AA tandem repeats of Q-K-A-[APS]-X. 5 consecutive repeat copies span residues 178–182 (QKAPA), 183–187 (QKAAG), 188–192 (QKAAP), 195–197 (KGQ), and 198–200 (KGQ). Positions 195-200 (KGQKGQ) are 2 X 3 AA tandem repeats of K-G-Q. Lysine 206 carries the post-translational modification N6-succinyllysine.

It belongs to the eukaryotic ribosomal protein eL14 family. Component of the large ribosomal subunit.

The protein localises to the cytoplasm. Functionally, component of the large ribosomal subunit. The ribosome is a large ribonucleoprotein complex responsible for the synthesis of proteins in the cell. This Mus musculus (Mouse) protein is Large ribosomal subunit protein eL14 (Rpl14).